Consider the following 832-residue polypeptide: Alpha-glucan phosphorylase, H isozyme (832 aa).

At Lys678 the chain carries N6-(pyridoxal phosphate)lysine.

It belongs to the glycogen phosphorylase family. The cofactor is pyridoxal 5'-phosphate.

The protein resides in the cytoplasm. It carries out the reaction [(1-&gt;4)-alpha-D-glucosyl](n) + phosphate = [(1-&gt;4)-alpha-D-glucosyl](n-1) + alpha-D-glucose 1-phosphate. Its function is as follows. Phosphorylase is an important allosteric enzyme in carbohydrate metabolism. Enzymes from different sources differ in their regulatory mechanisms and in their natural substrates. However, all known phosphorylases share catalytic and structural properties. The polypeptide is Alpha-glucan phosphorylase, H isozyme (Triticum aestivum (Wheat)).